Consider the following 221-residue polypeptide: Lipoprotein-releasing system ATP-binding protein LolD (221 aa).

The region spanning 6 to 220 is the ABC transporter domain; sequence LILKKISKHY…YNLKNGLLNI (215 aa). Position 42–49 (42–49) interacts with ATP; it reads GSSGSGKS.

The protein belongs to the ABC transporter superfamily. Lipoprotein translocase (TC 3.A.1.125) family. The complex is composed of two ATP-binding proteins (LolD) and two transmembrane proteins (LolC and LolE).

It localises to the cell inner membrane. Functionally, part of the ABC transporter complex LolCDE involved in the translocation of mature outer membrane-directed lipoproteins, from the inner membrane to the periplasmic chaperone, LolA. Responsible for the formation of the LolA-lipoprotein complex in an ATP-dependent manner. The protein is Lipoprotein-releasing system ATP-binding protein LolD of Rickettsia typhi (strain ATCC VR-144 / Wilmington).